Here is a 381-residue protein sequence, read N- to C-terminus: MKRLSVLCSLLLVAAALGTELPLATPCDEEACKLPDCRCSSTNIPGGLRARDTPQFVTVTFDDGINVINIETYREVLYGRSNSNRCPAGATFYVSHEYTNYQLVNELYNRGFEIALHSISHRTPQAFWADATYQNLVQEIGDQKRQMAHFASIPASAIKGVRIPFLQMSGNTSFQVMADFDLLYDCTWPTTALTNPGLWPYTLHHESIQDCIIPPCPTASIPGPWVLPMISWRDLNNFPCSMVDGCFFTPDRTDEEGWFKFILTNFERHYLGNRAPFGFFVHEWFISSNPAIKRAFVRFMDIINNLNDVFMVNSAEVIDWVKNPVPIDRYRQQQCKFTMPSICRPSFCGPLTGTHNQLSYYMTICNTCPRNYPWVGNPLGQ.

An N-terminal signal peptide occupies residues 1–18; sequence MKRLSVLCSLLLVAAALG. 2 cysteine pairs are disulfide-bonded: C27–C39 and C32–C37. Zn(2+) is bound by residues D63, H117, and H121. 5 disulfide bridges follow: C86-C335, C211-C216, C240-C246, C343-C365, and C348-C368. The N-linked (GlcNAc...) asparagine glycan is linked to N171.

It belongs to the carbohydrate esterase 4 (CE4) family. Zn(2+) serves as cofactor. As to expression, strongly expressed in the midgut. Has little or no expression in other tissues tested.

The protein resides in the secreted. The enzyme catalyses [(1-&gt;4)-N-acetyl-beta-D-glucosaminyl](n) + n H2O = chitosan + n acetate. Hydrolyzes the N-acetamido groups of N-acetyl-D-glucosamine (GlcNAc) residues in chitin. Shows activity towards the chitinous oligomers GlcNAc(3), GlcNAc(4), GlcNAc(5) and GlcNAc(6), but not GlcNAc or GlcNAc(2). Requires the substrate to occupy subsites 0, +1, and +2 for optimum catalysis. The protein is Chitin deacetylase 8 of Bombyx mori (Silk moth).